Here is a 544-residue protein sequence, read N- to C-terminus: Chaperonin GroEL (544 aa).

ATP contacts are provided by residues 30-33, Lys-51, 87-91, Gly-415, 479-481, and Asp-495; these read TLGP, DGTTT, and NAA.

Belongs to the chaperonin (HSP60) family. Forms a cylinder of 14 subunits composed of two heptameric rings stacked back-to-back. Interacts with the co-chaperonin GroES.

It is found in the cytoplasm. The enzyme catalyses ATP + H2O + a folded polypeptide = ADP + phosphate + an unfolded polypeptide.. In terms of biological role, together with its co-chaperonin GroES, plays an essential role in assisting protein folding. The GroEL-GroES system forms a nano-cage that allows encapsulation of the non-native substrate proteins and provides a physical environment optimized to promote and accelerate protein folding. This is Chaperonin GroEL from Francisella tularensis subsp. tularensis (strain SCHU S4 / Schu 4).